Consider the following 251-residue polypeptide: uncharacterized protein (251 aa).

An N-terminal signal peptide occupies residues M1–A18.

Belongs to the MlaA family.

This is an uncharacterized protein from Rickettsia typhi (strain ATCC VR-144 / Wilmington).